A 265-amino-acid chain; its full sequence is Keratinocyte-associated transmembrane protein 2 (265 aa).

A signal peptide spans 1 to 49 (MAAAALKRMRGPAQAKLLPGSAIQALVGLARPLVLALLLVSAALSSVVS). Over 50-196 (RTDSPSPTVL…MPSSNIEEED (147 aa)) the chain is Extracellular. Residues 72–96 (THENQTKPSISQISTTLPPTMSTEK) are compositionally biased toward polar residues. Disordered regions lie at residues 72–123 (THEN…EDPS) and 135–168 (SPST…SDDT). Residue Asn75 is glycosylated (N-linked (GlcNAc...) asparagine). Acidic residues predominate over residues 114-123 (EEADNNEDPS). A helical transmembrane segment spans residues 197 to 217 (SHFFFHLIIFAFCIAVVYITY). The Cytoplasmic segment spans residues 218–265 (HNKRKIFLLVQSRKWRDGLCSKTVEYHRLDQNVNEAMPSLKITNDYTF). Phosphoserine is present on residues Ser229 and Ser256.

Its subcellular location is the membrane. The sequence is that of Keratinocyte-associated transmembrane protein 2 (KCT2) from Pongo abelii (Sumatran orangutan).